A 293-amino-acid chain; its full sequence is UDP-3-O-acyl-N-acetylglucosamine deacetylase (293 aa).

The Zn(2+) site is built by histidine 79, histidine 236, and aspartate 240. Histidine 263 (proton donor) is an active-site residue.

It belongs to the LpxC family. Zn(2+) serves as cofactor.

It catalyses the reaction a UDP-3-O-[(3R)-3-hydroxyacyl]-N-acetyl-alpha-D-glucosamine + H2O = a UDP-3-O-[(3R)-3-hydroxyacyl]-alpha-D-glucosamine + acetate. Its pathway is glycolipid biosynthesis; lipid IV(A) biosynthesis; lipid IV(A) from (3R)-3-hydroxytetradecanoyl-[acyl-carrier-protein] and UDP-N-acetyl-alpha-D-glucosamine: step 2/6. Its function is as follows. Catalyzes the hydrolysis of UDP-3-O-myristoyl-N-acetylglucosamine to form UDP-3-O-myristoylglucosamine and acetate, the committed step in lipid A biosynthesis. The polypeptide is UDP-3-O-acyl-N-acetylglucosamine deacetylase (Phenylobacterium zucineum (strain HLK1)).